Consider the following 439-residue polypeptide: GTPase Obg (439 aa).

Residues 4–162 (IEFIDVVDIY…KHIQLELKLL (159 aa)) form the Obg domain. The OBG-type G domain occupies 163–336 (ADVGLIGYPN…LKYAMWDIIK (174 aa)). Residues 169–176 (GYPNVGKS), 194–198 (FTTLV), 218–221 (DIPG), 288–291 (NKSD), and 317–319 (SAV) each bind GTP. Residues Ser176 and Thr196 each contribute to the Mg(2+) site. An OCT domain is found at 361–439 (LVLPDRVDIK…VEGVDFIFKE (79 aa)).

This sequence belongs to the TRAFAC class OBG-HflX-like GTPase superfamily. OBG GTPase family. In terms of assembly, monomer. The cofactor is Mg(2+).

Its subcellular location is the cytoplasm. Functionally, an essential GTPase which binds GTP, GDP and possibly (p)ppGpp with moderate affinity, with high nucleotide exchange rates and a fairly low GTP hydrolysis rate. Plays a role in control of the cell cycle, stress response, ribosome biogenesis and in those bacteria that undergo differentiation, in morphogenesis control. In Fervidobacterium nodosum (strain ATCC 35602 / DSM 5306 / Rt17-B1), this protein is GTPase Obg.